A 336-amino-acid polypeptide reads, in one-letter code: D-alanine--D-alanine ligase (336 aa).

The ATP-grasp domain occupies 124–330 (KMWFSALGIP…FATFLEQAIL (207 aa)). 154–209 (AFDEWGSVFIKAASQGSSVGCFPAHRREDIPGLVRKAFEYAPFVVVEKTIKARELE) contributes to the ATP binding site. Mg(2+) contacts are provided by aspartate 284, glutamate 297, and asparagine 299.

It belongs to the D-alanine--D-alanine ligase family. The cofactor is Mg(2+). Mn(2+) serves as cofactor.

The protein localises to the cytoplasm. The catalysed reaction is 2 D-alanine + ATP = D-alanyl-D-alanine + ADP + phosphate + H(+). Its pathway is cell wall biogenesis; peptidoglycan biosynthesis. Its function is as follows. Cell wall formation. In Shewanella amazonensis (strain ATCC BAA-1098 / SB2B), this protein is D-alanine--D-alanine ligase.